A 101-amino-acid chain; its full sequence is uncharacterized protein (101 aa).

2 helical membrane-spanning segments follow: residues 3–23 (IVYEYAISTNWIWLYVWLFLF) and 39–59 (AFLSLPPIVSFALSVATLIFF).

Its subcellular location is the membrane. This is an uncharacterized protein from Saccharomyces cerevisiae (strain ATCC 204508 / S288c) (Baker's yeast).